The chain runs to 241 residues: Uridylate kinase (241 aa).

Residue 14 to 17 (KLSG) coordinates ATP. Gly-56 serves as a coordination point for UMP. ATP-binding residues include Gly-57 and Arg-61. UMP is bound by residues Asp-77 and 138-145 (TGNPFFTT). Positions 165, 171, and 174 each coordinate ATP.

The protein belongs to the UMP kinase family. As to quaternary structure, homohexamer.

It localises to the cytoplasm. It carries out the reaction UMP + ATP = UDP + ADP. Its pathway is pyrimidine metabolism; CTP biosynthesis via de novo pathway; UDP from UMP (UMPK route): step 1/1. Inhibited by UTP. Catalyzes the reversible phosphorylation of UMP to UDP. This is Uridylate kinase from Psychrobacter arcticus (strain DSM 17307 / VKM B-2377 / 273-4).